Consider the following 890-residue polypeptide: Potassium/sodium hyperpolarization-activated cyclic nucleotide-gated channel 1 (890 aa).

The segment at 1–93 (MEGGGKPNSS…AEGPRRQYGF (93 aa)) is disordered. Over 1–142 (MEGGGKPNSS…WIIHPYSDFR (142 aa)) the chain is Cytoplasmic. The segment covering 8–34 (NSSSNSRDDGNSVFPAKASATGAGPAA) has biased composition (low complexity). Over residues 62–77 (DGGGGGGGGGGGGEEP) the composition is skewed to gly residues. The chain crosses the membrane as a helical span at residues 143–164 (FYWDLIMLIMMVGNLVIIPVGI). At 165–173 (TFFTEQTTT) the chain is on the extracellular side. Residues 174–194 (PWIIFNVASDTVFLLDLIMNF) traverse the membrane as a helical segment. The Cytoplasmic segment spans residues 195 to 215 (RTGTVNEDSSEIILDPKVIKM). Residues 216–236 (NYLKSWFVVDFISSIPVDYIF) traverse the membrane as a helical segment. Topologically, residues 237–260 (LIVEKGMDSEVYKTARALRIVRFT) are extracellular. A helical; Voltage-sensor transmembrane segment spans residues 261–281 (KILSLLRLLRLSRLIRYIHQW). The Cytoplasmic portion of the chain corresponds to 282–295 (EEIFHMTYDLASAV). Residues 296 to 318 (VRIFNLIGMMLLLCHWDGCLQFL) form a helical membrane-spanning segment. The Extracellular segment spans residues 319-344 (VPLLQDFPPDCWVSLNEMVNDSWGKQ). The N-linked (GlcNAc...) asparagine glycan is linked to Asn338. Residues 345 to 366 (YSYALFKAMSHMLCIGYGAQAP) constitute an intramembrane region (pore-forming). The short motif at 358-362 (CIGYG) is the Selectivity filter element. Residues 367 to 371 (VSMSD) are Extracellular-facing. The helical transmembrane segment at 372–392 (LWITMLSMIVGATCYAMFVGH) threads the bilayer. Topologically, residues 393–890 (ATALIQSLDS…AEKPRFASNL (498 aa)) are cytoplasmic. Residues Gly539, Glu540, Cys542, Arg549, Thr550, Arg590, and Arg593 each coordinate 3',5'-cyclic AMP. Composition is skewed to low complexity over residues 644 to 691 (MTTL…PQPS) and 731 to 749 (QQQP…TQPQ). Disordered regions lie at residues 644–692 (MTTL…QPSA), 725–796 (SQLS…LPHE), and 845–890 (MSSG…ASNL). The span at 770–780 (STQALHNTNLT) shows a compositional bias: polar residues. The segment covering 854-865 (RGVPPAPPPPAA) has biased composition (pro residues). The segment covering 880–890 (DAEKPRFASNL) has biased composition (basic and acidic residues).

Belongs to the potassium channel HCN family. As to quaternary structure, homotetramer. Heterotetramer with HCN2. The potassium channel is composed of a homo- or heterotetrameric complex of pore-forming subunits. Interacts with KCNE2. Interacts with the SH3 domain of CSK. Detected in brain, in particular in amygdala and hippocampus, while expression in caudate nucleus, corpus callosum, substantia nigra, subthalamic nucleus and thalamus is very low or not detectable. Detected at very low levels in muscle and pancreas.

The protein resides in the cell membrane. The enzyme catalyses Na(+)(in) = Na(+)(out). The catalysed reaction is K(+)(in) = K(+)(out). With respect to regulation, activated by cAMP, and at 10-100 times higher concentrations, also by cGMP. cAMP binding promotes tetramerization and formation of an active channel. Compared to other family members, cAMP has less stimulatory effect on HCN1 because part of the molecules already contain bound cAMP and form homotetramers when cAMP levels are low, this inherent tetramerization in HCN1 results in a weaker response to increased cAMP. Inhibited by Cs(1+), zatebradine, capsazepine and ZD7288. Hyperpolarization-activated ion channel that are permeable to sodium and potassium ions. Displays lower selectivity for K(+) over Na(+) ions. Contributes to the native pacemaker currents in heart (If) and in the generation of the I(h) current which controls neuron excitability. Participates in cerebellar mechanisms of motor learning. May mediate responses to sour stimuli. In Homo sapiens (Human), this protein is Potassium/sodium hyperpolarization-activated cyclic nucleotide-gated channel 1 (HCN1).